Reading from the N-terminus, the 495-residue chain is ATP synthase subunit beta, chloroplastic (495 aa).

G172–T179 contributes to the ATP binding site.

It belongs to the ATPase alpha/beta chains family. In terms of assembly, F-type ATPases have 2 components, CF(1) - the catalytic core - and CF(0) - the membrane proton channel. CF(1) has five subunits: alpha(3), beta(3), gamma(1), delta(1), epsilon(1). CF(0) has four main subunits: a(1), b(1), b'(1) and c(9-12).

Its subcellular location is the plastid. The protein resides in the chloroplast thylakoid membrane. It catalyses the reaction ATP + H2O + 4 H(+)(in) = ADP + phosphate + 5 H(+)(out). Functionally, produces ATP from ADP in the presence of a proton gradient across the membrane. The catalytic sites are hosted primarily by the beta subunits. The chain is ATP synthase subunit beta, chloroplastic from Pseudogaltonia clavata (Cape hyacinth).